Reading from the N-terminus, the 143-residue chain is Large ribosomal subunit protein uL11 (143 aa).

Belongs to the universal ribosomal protein uL11 family. Part of the ribosomal stalk of the 50S ribosomal subunit. Interacts with L10 and the large rRNA to form the base of the stalk. L10 forms an elongated spine to which L12 dimers bind in a sequential fashion forming a multimeric L10(L12)X complex. Post-translationally, one or more lysine residues are methylated.

In terms of biological role, forms part of the ribosomal stalk which helps the ribosome interact with GTP-bound translation factors. The protein is Large ribosomal subunit protein uL11 of Delftia acidovorans (strain DSM 14801 / SPH-1).